The sequence spans 405 residues: Deoxyguanosinetriphosphate triphosphohydrolase-like protein (405 aa).

The HD domain occupies 75 to 219 (RLTHTIEVAQ…AAIADDIAYN (145 aa)).

The protein belongs to the dGTPase family. Type 2 subfamily.

The protein is Deoxyguanosinetriphosphate triphosphohydrolase-like protein of Sinorhizobium medicae (strain WSM419) (Ensifer medicae).